The following is a 235-amino-acid chain: Large ribosomal subunit protein uL1 (235 aa).

It belongs to the universal ribosomal protein uL1 family. In terms of assembly, part of the 50S ribosomal subunit.

Functionally, binds directly to 23S rRNA. The L1 stalk is quite mobile in the ribosome, and is involved in E site tRNA release. Protein L1 is also a translational repressor protein, it controls the translation of the L11 operon by binding to its mRNA. The sequence is that of Large ribosomal subunit protein uL1 from Mycobacterium leprae (strain Br4923).